Here is a 121-residue protein sequence, read N- to C-terminus: uncharacterized protein (121 aa).

This is an uncharacterized protein from Saccharomyces cerevisiae (strain ATCC 204508 / S288c) (Baker's yeast).